The following is a 286-amino-acid chain: Small ribosomal subunit protein uS2 (286 aa).

The segment at 231-286 (ERAQAEAKAAAGDNDAPVSSEGESTEVASDAASTASETTATSSDESAAESSEAESK) is disordered. Positions 255-280 (TEVASDAASTASETTATSSDESAAES) are enriched in low complexity.

It belongs to the universal ribosomal protein uS2 family.

The protein is Small ribosomal subunit protein uS2 of Corynebacterium kroppenstedtii (strain DSM 44385 / JCM 11950 / CIP 105744 / CCUG 35717).